Here is a 544-residue protein sequence, read N- to C-terminus: BTB/POZ domain-containing protein At2g13690 (544 aa).

Disordered stretches follow at residues 34–66 and 82–111; these read ASPD…PQSS and LSPG…EEDD. A compositionally biased stretch (polar residues) spans 37–55; it reads DTRSISSRNHIPAKSQQQR. The segment covering 93–103 has biased composition (low complexity); the sequence is DPTVTTMQETE. The BTB domain occupies 142–225; it reads YDARLSLKGR…MFEESNVIIK (84 aa).

Its pathway is protein modification; protein ubiquitination. Functionally, may act as a substrate-specific adapter of an E3 ubiquitin-protein ligase complex (CUL3-RBX1-BTB) which mediates the ubiquitination and subsequent proteasomal degradation of target proteins. The sequence is that of BTB/POZ domain-containing protein At2g13690 (PRL1-IFG) from Arabidopsis thaliana (Mouse-ear cress).